Consider the following 878-residue polypeptide: Pyruvate dehydrogenase phosphatase regulatory subunit, mitochondrial (878 aa).

The transit peptide at 1 to 26 directs the protein to the mitochondrion; it reads MLPRLLAVVRGPGSCRGWREGSPARG.

Belongs to the GcvT family. As to quaternary structure, heterodimer of a catalytic (PDP1) and a regulatory (PDPR) subunit.

The protein localises to the mitochondrion matrix. Functionally, decreases the sensitivity of PDP1 to magnesium ions, and this inhibition is reversed by the polyamine spermine. In Bos taurus (Bovine), this protein is Pyruvate dehydrogenase phosphatase regulatory subunit, mitochondrial (PDPR).